The sequence spans 695 residues: UvrABC system protein B (695 aa).

The region spanning 45 to 434 (EGIEDGLSFQ…QVVEQVVRPT (390 aa)) is the Helicase ATP-binding domain. 58–65 (GVTGSGKT) serves as a coordination point for ATP. The short motif at 111-134 (YYDYYQPEAYVPQRDLFIEKDSSI) is the Beta-hairpin element. The Helicase C-terminal domain occupies 449–602 (QVDDLLSEIN…QMAFNEANGI (154 aa)). The UVR domain maps to 646–681 (SKEIKRLEKLMMDHAKNLEFEKAAQVRDQLAKLKAQ).

Belongs to the UvrB family. Forms a heterotetramer with UvrA during the search for lesions. Interacts with UvrC in an incision complex.

Its subcellular location is the cytoplasm. The UvrABC repair system catalyzes the recognition and processing of DNA lesions. A damage recognition complex composed of 2 UvrA and 2 UvrB subunits scans DNA for abnormalities. Upon binding of the UvrA(2)B(2) complex to a putative damaged site, the DNA wraps around one UvrB monomer. DNA wrap is dependent on ATP binding by UvrB and probably causes local melting of the DNA helix, facilitating insertion of UvrB beta-hairpin between the DNA strands. Then UvrB probes one DNA strand for the presence of a lesion. If a lesion is found the UvrA subunits dissociate and the UvrB-DNA preincision complex is formed. This complex is subsequently bound by UvrC and the second UvrB is released. If no lesion is found, the DNA wraps around the other UvrB subunit that will check the other stand for damage. In Cupriavidus pinatubonensis (strain JMP 134 / LMG 1197) (Cupriavidus necator (strain JMP 134)), this protein is UvrABC system protein B.